A 960-amino-acid polypeptide reads, in one-letter code: MSRLIVKNLPNGMKEERFRQLFAAFGTLTDCSLKFTKDGKFRKFGFIGFKSEEEAQKAQKHFNKSFIDTSRITVEFCKSFGDPAKPRAWSKHAQKPSQPKQPPKDSTTPEIKKDEKKKKVAGQLEKLKEDTEFQEFLSVHQRRAQAATWANDGLDAEPSKGKSKPASDYLNFDSDSGQESEEEGAGEDLEEEASLEPKAAVQKELSDMDYLKSKMVKAGSSSSSEEEESEDEAVHCDEGSEAEEEDSSATPVLQERDSKGAGQEQGMPAGKKRPPEARAETEKPANQKEPTTCHTVKLRGAPFNVTEKNVMEFLAPLKPVAIRIVRNAHGNKTGYIFVDFSNEEEVKQALKCNREYMGGRYIEVFREKNVPTTKGAPKNTTKSWQGRILGENEEEEDLAESGRLFVRNLPYTSTEEDLEKLFSKYGPLSELHYPIDSLTKKPKGFAFITFMFPEHAVKAYSEVDGQVFQGRMLHVLPSTIKKEASEDASALGSSSYKKKKEAQDKANSASSHNWNTLFMGPNAVADAIAQKYNATKSQVFDHETKGSVAVRVALGETQLVQEVRRFLIDNGVSLDSFSQAAAERSKTVILVKNLPAGTLAAQLQETFGHFGSLGRVLLPEGGITAIVEFLEPLEARKAFRHLAYSKFHHVPLYLEWAPVGVFSSTAPQKKKLQDTPSEPMEKDPAEPETVPDGETPEDENPTEEGADNSSAKMEEEEEEEEEEEESLPGCTLFIKNLNFDTTEEKLKEVFSKVGTVKSCSISKKKNKAGVLLSMGFGFVEYRKPEQAQKALKQLQGHVVDGHKLEVRISERATKPAVTLARKKQVPRKQTTSKILVRNIPFQAHSREIRELFSTFGELKTVRLPKKMTGTGTHRGFGFVDFLTKQDAKRAFNALCHSTHLYGRRLVLEWADSEVTLQALRRKTAAHFHEPPKKKRSVVLDEILEQLEGSDSDSEEQTLQL.

In terms of domain architecture, RRM 1 spans 2–79 (SRLIVKNLPN…SRITVEFCKS (78 aa)). Disordered regions lie at residues 85–119 (KPRA…KKKK) and 149–294 (WAND…TTCH). Serine 174, serine 176, and serine 180 each carry phosphoserine. Residues 176–194 (SGQESEEEGAGEDLEEEAS) show a composition bias toward acidic residues. A compositionally biased stretch (basic and acidic residues) spans 273–286 (RPPEARAETEKPAN). RRM domains are found at residues 294 to 369 (HTVK…REKN) and 402 to 480 (GRLF…PSTI). Residue lysine 481 forms a Glycyl lysine isopeptide (Lys-Gly) (interchain with G-Cter in SUMO2) linkage. Positions 491–513 (LGSSSYKKKKEAQDKANSASSHN) are disordered. Positions 587–659 (TVILVKNLPA…VPLYLEWAPV (73 aa)) constitute an RRM 4 domain. Residues 667 to 729 (PQKKKLQDTP…EEEEEESLPG (63 aa)) are disordered. Composition is skewed to acidic residues over residues 689-706 (TVPD…EEGA) and 714-726 (EEEE…EEES). 2 consecutive RRM domains span residues 730-811 (CTLF…ISER) and 832-912 (SKIL…WADS). 3 positions are modified to phosphoserine: serine 936, serine 949, and serine 951.

This sequence belongs to the RRM MRD1 family. In terms of tissue distribution, expressed in the crypts of Lieberkuhn of the intestine and in intestinal neoplasia (at protein level).

The protein localises to the nucleus. It is found in the nucleolus. It localises to the nucleoplasm. The protein resides in the cytoplasm. Its subcellular location is the chromosome. Functionally, plays a role in embryo pre-implantation development. This is Probable RNA-binding protein 19 (RBM19) from Homo sapiens (Human).